Reading from the N-terminus, the 343-residue chain is Ribosomal RNA small subunit methyltransferase C (343 aa).

It belongs to the methyltransferase superfamily. RsmC family. Monomer.

It localises to the cytoplasm. The enzyme catalyses guanosine(1207) in 16S rRNA + S-adenosyl-L-methionine = N(2)-methylguanosine(1207) in 16S rRNA + S-adenosyl-L-homocysteine + H(+). In terms of biological role, specifically methylates the guanine in position 1207 of 16S rRNA in the 30S particle. The polypeptide is Ribosomal RNA small subunit methyltransferase C (Shigella sonnei (strain Ss046)).